Here is a 334-residue protein sequence, read N- to C-terminus: Holliday junction branch migration complex subunit RuvB (334 aa).

Residues 4-184 (ADRLIQPQLQ…FGIPLRLEFY (181 aa)) are large ATPase domain (RuvB-L). ATP is bound by residues Arg24, Gly65, Lys68, Thr69, Thr70, 131 to 133 (EDY), Arg174, Tyr184, and Arg221. Thr69 contributes to the Mg(2+) binding site. Residues 185–255 (NVKDLSTIVS…VAEHALDLLD (71 aa)) form a small ATPAse domain (RuvB-S) region. The interval 258–334 (GEGFDYMDRK…YLHFGMIKPE (77 aa)) is head domain (RuvB-H). Residues Arg294, Arg313, and Arg318 each coordinate DNA.

It belongs to the RuvB family. As to quaternary structure, homohexamer. Forms an RuvA(8)-RuvB(12)-Holliday junction (HJ) complex. HJ DNA is sandwiched between 2 RuvA tetramers; dsDNA enters through RuvA and exits via RuvB. An RuvB hexamer assembles on each DNA strand where it exits the tetramer. Each RuvB hexamer is contacted by two RuvA subunits (via domain III) on 2 adjacent RuvB subunits; this complex drives branch migration. In the full resolvosome a probable DNA-RuvA(4)-RuvB(12)-RuvC(2) complex forms which resolves the HJ.

The protein localises to the cytoplasm. It catalyses the reaction ATP + H2O = ADP + phosphate + H(+). The RuvA-RuvB-RuvC complex processes Holliday junction (HJ) DNA during genetic recombination and DNA repair, while the RuvA-RuvB complex plays an important role in the rescue of blocked DNA replication forks via replication fork reversal (RFR). RuvA specifically binds to HJ cruciform DNA, conferring on it an open structure. The RuvB hexamer acts as an ATP-dependent pump, pulling dsDNA into and through the RuvAB complex. RuvB forms 2 homohexamers on either side of HJ DNA bound by 1 or 2 RuvA tetramers; 4 subunits per hexamer contact DNA at a time. Coordinated motions by a converter formed by DNA-disengaged RuvB subunits stimulates ATP hydrolysis and nucleotide exchange. Immobilization of the converter enables RuvB to convert the ATP-contained energy into a lever motion, pulling 2 nucleotides of DNA out of the RuvA tetramer per ATP hydrolyzed, thus driving DNA branch migration. The RuvB motors rotate together with the DNA substrate, which together with the progressing nucleotide cycle form the mechanistic basis for DNA recombination by continuous HJ branch migration. Branch migration allows RuvC to scan DNA until it finds its consensus sequence, where it cleaves and resolves cruciform DNA. The polypeptide is Holliday junction branch migration complex subunit RuvB (Shewanella sp. (strain MR-7)).